The primary structure comprises 139 residues: Transcription antitermination protein NusB (139 aa).

Belongs to the NusB family.

Involved in transcription antitermination. Required for transcription of ribosomal RNA (rRNA) genes. Binds specifically to the boxA antiterminator sequence of the ribosomal RNA (rrn) operons. The protein is Transcription antitermination protein NusB of Klebsiella pneumoniae (strain 342).